We begin with the raw amino-acid sequence, 51 residues long: Mitochondrial import receptor subunit TOM5 homolog (51 aa).

Met1 is modified (N-acetylmethionine). Residue Lys10 forms a Glycyl lysine isopeptide (Lys-Gly) (interchain with G-Cter in SUMO2) linkage. The chain crosses the membrane as a helical span at residues 27–45 (SIRNFLIYVALLRVTPYIL).

The protein belongs to the Tom5 family. In terms of assembly, forms part of the preprotein translocase complex of the outer mitochondrial membrane (TOM complex) which consists of at least 7 different proteins (TOMM5, TOMM6, TOMM7, TOMM20, TOMM22, TOMM40 and TOMM70).

It localises to the mitochondrion outer membrane. In Mus musculus (Mouse), this protein is Mitochondrial import receptor subunit TOM5 homolog.